The primary structure comprises 93 residues: Large ribosomal subunit protein uL23cz/uL23cy (93 aa).

Belongs to the universal ribosomal protein uL23 family. As to quaternary structure, part of the 50S ribosomal subunit.

The protein localises to the plastid. Its subcellular location is the chloroplast. In terms of biological role, binds to 23S rRNA. This chain is Large ribosomal subunit protein uL23cz/uL23cy (rpl23-A), found in Populus alba (White poplar).